Here is a 475-residue protein sequence, read N- to C-terminus: MAPLRPIFTLALLLWVVLADQESCKDRCTEGFNANRKCQCDELCSYYQSCCADYAAECKPQVTRGDVFTMPEDEYGPYDYIEQTKDNASVHAQPESPTVGQEPTLSPDLQTEGGAEPTHEVPLEPEMETLRPEGEDLQAGTTELGTSASPAEEELCSGKPFDAFTDLKNGSLFAFRGQYCYELDETAVRPGYPKLIQDVWGIEGPIDAAFTRINCQGKTYLFKGSQYWRFEDGILDPDYPRNISEGFSGIPDNVDAAFALPAHSYSGRERVYFFKGDKYWEYQFQQQPSQEECEGSSLSAVFEHFAMLHRDSWEDIFKLLFWGRPSGGARQPQFISRDWHGVPGKVDAAMAGRIYISGLTPSPSAKKQKSRRRSRKRYRSRYGRGRSQNSRRLSRSISRLWFSSEEVSLGPYNYEDYETSWLKPATSEPIQSVYFFSGDKYYRVNLRTQRVDTVNPPYPRSIAQYWLGCPAPGGQ.

The first 19 residues, 1 to 19, serve as a signal peptide directing secretion; the sequence is MAPLRPIFTLALLLWVVLA. Residues 20–63 form the SMB domain; the sequence is DQESCKDRCTEGFNANRKCQCDELCSYYQSCCADYAAECKPQVT. Cystine bridges form between cysteine 24–cysteine 28, cysteine 24–cysteine 40, cysteine 28–cysteine 58, cysteine 38–cysteine 40, cysteine 38–cysteine 51, cysteine 44–cysteine 50, and cysteine 51–cysteine 58. Residues 64 to 66 carry the Cell attachment site motif; it reads RGD. Threonine 69 carries the phosphothreonine modification. 3 positions are modified to sulfotyrosine: tyrosine 75, tyrosine 78, and tyrosine 80. A glycan (N-linked (GlcNAc...) asparagine) is linked at asparagine 87. The tract at residues 87 to 123 is disordered; the sequence is NASVHAQPESPTVGQEPTLSPDLQTEGGAEPTHEVPL. Polar residues predominate over residues 95 to 109; that stretch reads ESPTVGQEPTLSPDL. 3 Hemopexin repeats span residues 158–202, 203–250, and 251–305; these read GKPF…VWGI, EGPI…FSGI, and PDNV…FEHF. 2 N-linked (GlcNAc...) asparagine glycosylation sites follow: asparagine 169 and asparagine 242. 2 positions are modified to sulfotyrosine: tyrosine 279 and tyrosine 282. Serine 312 carries the post-translational modification Phosphoserine. The segment at 359–391 is disordered; the sequence is LTPSPSAKKQKSRRRSRKRYRSRYGRGRSQNSR. The segment covering 366–384 has biased composition (basic residues); the sequence is KKQKSRRRSRKRYRSRYGR. The tract at residues 366–392 is glycosaminoglycan binding region; sequence KKQKSRRRSRKRYRSRYGRGRSQNSRR. Serine 394 is modified (phosphoserine). Residues 419–469 form a Hemopexin 4 repeat; it reads TSWLKPATSEPIQSVYFFSGDKYYRVNLRTQRVDTVNPPYPRSIAQYWLGC.

As to quaternary structure, interacts with SERPINE1/PAI1 and C1QBP. Monomer. Sulfated on tyrosine residues. Post-translationally, N- and O-glycosylated. In terms of processing, it has been suggested that the active SMB domain may be permitted considerable disulfide bond heterogeneity or variability, thus two alternate disulfide patterns based on 3D structures are described with 1 disulfide bond conserved in both. Plasma.

The protein localises to the secreted. It localises to the extracellular space. Its function is as follows. Vitronectin is a cell adhesion and spreading factor found in serum and tissues. Vitronectin interact with glycosaminoglycans and proteoglycans. Is recognized by certain members of the integrin family and serves as a cell-to-substrate adhesion molecule. Inhibitor of the membrane-damaging effect of the terminal cytolytic complement pathway. The polypeptide is Vitronectin (VTN) (Oryctolagus cuniculus (Rabbit)).